A 198-amino-acid polypeptide reads, in one-letter code: Elongation factor Ts (198 aa).

An involved in Mg(2+) ion dislocation from EF-Tu region spans residues 81–84 (TDFV).

This sequence belongs to the EF-Ts family.

The protein localises to the cytoplasm. Its function is as follows. Associates with the EF-Tu.GDP complex and induces the exchange of GDP to GTP. It remains bound to the aminoacyl-tRNA.EF-Tu.GTP complex up to the GTP hydrolysis stage on the ribosome. In Leptospira biflexa serovar Patoc (strain Patoc 1 / Ames), this protein is Elongation factor Ts.